The primary structure comprises 423 residues: Glutamate-1-semialdehyde 2,1-aminomutase (423 aa).

Lysine 262 carries the N6-(pyridoxal phosphate)lysine modification.

It belongs to the class-III pyridoxal-phosphate-dependent aminotransferase family. HemL subfamily. As to quaternary structure, homodimer. Pyridoxal 5'-phosphate is required as a cofactor.

It localises to the cytoplasm. It carries out the reaction (S)-4-amino-5-oxopentanoate = 5-aminolevulinate. It functions in the pathway porphyrin-containing compound metabolism; protoporphyrin-IX biosynthesis; 5-aminolevulinate from L-glutamyl-tRNA(Glu): step 2/2. The sequence is that of Glutamate-1-semialdehyde 2,1-aminomutase from Campylobacter fetus subsp. fetus (strain 82-40).